We begin with the raw amino-acid sequence, 656 residues long: Pyoverdine export ATP-binding/permease protein PvdT (656 aa).

In terms of domain architecture, ABC transporter spans 6–245 (IDLRGIRKSY…SANPAALQAV (240 aa)). Residue 43–50 (GASGSGKS) participates in ATP binding. The next 4 membrane-spanning stretches (helical) occupy residues 284-304 (ALTL…LAVG), 538-558 (IAAI…LMTV), 589-609 (LSVV…AALL), and 619-639 (LSAV…FGFM).

The protein belongs to the ABC transporter superfamily. Macrolide exporter (TC 3.A.1.122) family. Part of the tripartite efflux system PvdRT-OpmQ, which is composed of an inner membrane component with both ATPase and permease domains, PvdT, a periplasmic membrane fusion protein, PvdR, and an outer membrane component, OpmQ.

The protein resides in the cell inner membrane. In terms of biological role, part of the tripartite efflux system PvdRT-OpmQ required for the secretion into the extracellular milieu of the siderophore pyoverdine (PVD), which is involved in iron acquisition. This subunit binds PVD and drives its secretion by hydrolyzing ATP. The system is responsible for export of newly synthesized PVD after the final steps of biosynthesis have taken place in the periplasm. It is also responsible for recycling of PVD after internalization of ferri-PVD into the periplasm by the outer-membrane receptor FpvA and release of iron from PVD, thus making PVD available for new cycles of iron uptake. In Pseudomonas syringae pv. tomato (strain ATCC BAA-871 / DC3000), this protein is Pyoverdine export ATP-binding/permease protein PvdT.